A 251-amino-acid polypeptide reads, in one-letter code: DNA repair protein RecO (251 aa).

It belongs to the RecO family.

Functionally, involved in DNA repair and RecF pathway recombination. This chain is DNA repair protein RecO, found in Acidiphilium cryptum (strain JF-5).